The sequence spans 220 residues: Peptide methionine sulfoxide reductase MsrA (220 aa).

Cys59 is a catalytic residue.

The protein belongs to the MsrA Met sulfoxide reductase family.

The enzyme catalyses L-methionyl-[protein] + [thioredoxin]-disulfide + H2O = L-methionyl-(S)-S-oxide-[protein] + [thioredoxin]-dithiol. The catalysed reaction is [thioredoxin]-disulfide + L-methionine + H2O = L-methionine (S)-S-oxide + [thioredoxin]-dithiol. Has an important function as a repair enzyme for proteins that have been inactivated by oxidation. Catalyzes the reversible oxidation-reduction of methionine sulfoxide in proteins to methionine. This chain is Peptide methionine sulfoxide reductase MsrA, found in Corynebacterium kroppenstedtii (strain DSM 44385 / JCM 11950 / CIP 105744 / CCUG 35717).